A 444-amino-acid chain; its full sequence is Forkhead box protein F2 (444 aa).

The segment at 32-98 (PAAAAAAAAA…KKASSGLRRP (67 aa)) is disordered. Residues 34 to 75 (AAAAAAAAPETTSSSSSSSSASCASSSSSSNSASAPSAACKS) are compositionally biased toward low complexity. Gly residues predominate over residues 76-87 (AGGGGAGAGSGG). The segment at residues 99-190 (EKPPYSYIAL…EFMFEEGSFR (92 aa)) is a DNA-binding region (fork-head). Disordered regions lie at residues 256–323 (GAGA…SPAM) and 338–367 (AHWS…SAGL). Basic residues predominate over residues 263–274 (AHPHHHHHHHVP). Positions 293–308 (GPGGVGAAGGGGGGDY) are enriched in gly residues. Residues 309–323 (GPDSSSSPVPSSPAM) show a composition bias toward low complexity.

As to quaternary structure, interacts with the transcription factors TBP and TFIIB. In terms of tissue distribution, lung and placenta. Predominantly expressed in gastrointestinal tract including stomach.

The protein resides in the nucleus. Probable transcription activator for a number of lung-specific genes. Mediates up-regulation of the E3 ligase IRF2BPL and drives ubiquitination and degradation of CTNNB1. This Homo sapiens (Human) protein is Forkhead box protein F2 (FOXF2).